Reading from the N-terminus, the 450-residue chain is Endosomal transmembrane epsin interactor 1 (450 aa).

The signal sequence occupies residues 1–29 (MILLVNLFVLLSVVCVLLNLAGFILGCQG). The Lumenal portion of the chain corresponds to 30-85 (AQFVSSVPRCDLVDLGEGKICFCCEEFQPAKCTDKENALKLFPVQPCSAVHLLLKK). Residues 86 to 106 (VLFALCALNALTTTVCLVAAA) form a helical membrane-spanning segment. Topologically, residues 107–450 (LRYLQIFATR…LIGVIRETVL (344 aa)) are cytoplasmic. The mediates interaction with EPN1 stretch occupies residues 107–450 (LRYLQIFATR…LIGVIRETVL (344 aa)). 2 short sequence motifs (PPxY; mediates interaction with ITCH) span residues 148 to 151 (PPSY) and 194 to 197 (PPPY). Residues 235–284 (DGDIPNIPAEENASTSTPSSTLVRPIRSRRALPPLRTRSKSDPVLHPSEE) are disordered. Over residues 246 to 256 (NASTSTPSSTL) the composition is skewed to polar residues. The segment covering 273-284 (SKSDPVLHPSEE) has biased composition (basic and acidic residues). Residue Lys-274 forms a Glycyl lysine isopeptide (Lys-Gly) (interchain with G-Cter in ubiquitin) linkage. Ser-275 is modified (phosphoserine). Glycyl lysine isopeptide (Lys-Gly) (interchain with G-Cter in ubiquitin) cross-links involve residues Lys-329 and Lys-365.

The protein belongs to the ENTREP family. Interacts with ITCH; enhances the ubiquitination of CXCR4 by ITCH and the subsequent endocytosis and desensitization of the receptor. Interacts with EPN1. In terms of processing, monoubiquitinated at Lys-274, Lys-329 and Lys-365 by ITCH. As to expression, prominently expressed in muscle.

The protein localises to the early endosome membrane. It localises to the late endosome membrane. The protein resides in the recycling endosome membrane. It is found in the cell membrane. Functions as an activator of the E3 ubiquitin protein ligase ITCH in the ubiquitination of the CXCL12-activated CXCR4 receptor. Thereby, triggers CXCR4 endocytosis and desensitization, negatively regulating the CXCL12/CXCR4 signaling pathway. This is Endosomal transmembrane epsin interactor 1 from Homo sapiens (Human).